A 112-amino-acid polypeptide reads, in one-letter code: 2Fe-2S ferredoxin (112 aa).

A 2Fe-2S ferredoxin-type domain is found at 1 to 104; the sequence is MPQIVILPHA…DLVVEIPKYT (104 aa). [2Fe-2S] cluster is bound by residues cysteine 42, cysteine 48, cysteine 51, and cysteine 87.

This sequence belongs to the adrenodoxin/putidaredoxin family. [2Fe-2S] cluster serves as cofactor.

Its function is as follows. Ferredoxin are iron-sulfur proteins that transfer electrons in a wide variety of metabolic reactions. The sequence is that of 2Fe-2S ferredoxin (fdx) from Pseudomonas aeruginosa (strain ATCC 15692 / DSM 22644 / CIP 104116 / JCM 14847 / LMG 12228 / 1C / PRS 101 / PAO1).